A 132-amino-acid polypeptide reads, in one-letter code: Large-conductance mechanosensitive channel (132 aa).

The next 2 membrane-spanning stretches (helical) occupy residues 14–34 and 67–87; these read VIDL…VSSL and GNFI…FMFV.

This sequence belongs to the MscL family. As to quaternary structure, homopentamer.

The protein localises to the cell membrane. Its function is as follows. Channel that opens in response to stretch forces in the membrane lipid bilayer. May participate in the regulation of osmotic pressure changes within the cell. The sequence is that of Large-conductance mechanosensitive channel from Bacillus anthracis (strain A0248).